A 245-amino-acid chain; its full sequence is Acyl-protein thioesterase 1 (245 aa).

Residues S126, D182, and H214 each act as charge relay system in the active site.

It belongs to the AB hydrolase superfamily. AB hydrolase 2 family.

Its subcellular location is the cytoplasm. It is found in the nucleus. It catalyses the reaction S-hexadecanoyl-L-cysteinyl-[protein] + H2O = L-cysteinyl-[protein] + hexadecanoate + H(+). Hydrolyzes fatty acids from S-acylated cysteine residues in proteins with a strong preference for palmitoylated G-alpha proteins over other acyl substrates. Mediates the deacylation of G-alpha proteins such as GPA1 in vivo, but has weak or no activity toward palmitoylated Ras proteins. Has weak lysophospholipase activity in vitro; however such activity may not exist in vivo. In Neurospora crassa (strain ATCC 24698 / 74-OR23-1A / CBS 708.71 / DSM 1257 / FGSC 987), this protein is Acyl-protein thioesterase 1.